Here is a 482-residue protein sequence, read N- to C-terminus: tRNA sulfurtransferase (482 aa).

In terms of domain architecture, THUMP spans 61-165 (LAIRDALTRI…DDRLLLIKGR (105 aa)). Residues 183-184 (LI), lysine 265, glycine 287, and glutamine 296 contribute to the ATP site. The cysteines at positions 344 and 456 are disulfide-linked. Residues 404-482 (FGPNDVILDI…GFNNVKVYRP (79 aa)) form the Rhodanese domain. Cysteine 456 (cysteine persulfide intermediate) is an active-site residue.

This sequence belongs to the ThiI family.

The protein resides in the cytoplasm. The catalysed reaction is [ThiI sulfur-carrier protein]-S-sulfanyl-L-cysteine + a uridine in tRNA + 2 reduced [2Fe-2S]-[ferredoxin] + ATP + H(+) = [ThiI sulfur-carrier protein]-L-cysteine + a 4-thiouridine in tRNA + 2 oxidized [2Fe-2S]-[ferredoxin] + AMP + diphosphate. It catalyses the reaction [ThiS sulfur-carrier protein]-C-terminal Gly-Gly-AMP + S-sulfanyl-L-cysteinyl-[cysteine desulfurase] + AH2 = [ThiS sulfur-carrier protein]-C-terminal-Gly-aminoethanethioate + L-cysteinyl-[cysteine desulfurase] + A + AMP + 2 H(+). It participates in cofactor biosynthesis; thiamine diphosphate biosynthesis. Its function is as follows. Catalyzes the ATP-dependent transfer of a sulfur to tRNA to produce 4-thiouridine in position 8 of tRNAs, which functions as a near-UV photosensor. Also catalyzes the transfer of sulfur to the sulfur carrier protein ThiS, forming ThiS-thiocarboxylate. This is a step in the synthesis of thiazole, in the thiamine biosynthesis pathway. The sulfur is donated as persulfide by IscS. This is tRNA sulfurtransferase from Escherichia coli (strain 55989 / EAEC).